We begin with the raw amino-acid sequence, 509 residues long: Aspartyl/glutamyl-tRNA(Asn/Gln) amidotransferase subunit B (509 aa).

The protein belongs to the GatB/GatE family. GatB subfamily. As to quaternary structure, heterotrimer of A, B and C subunits.

The catalysed reaction is L-glutamyl-tRNA(Gln) + L-glutamine + ATP + H2O = L-glutaminyl-tRNA(Gln) + L-glutamate + ADP + phosphate + H(+). It catalyses the reaction L-aspartyl-tRNA(Asn) + L-glutamine + ATP + H2O = L-asparaginyl-tRNA(Asn) + L-glutamate + ADP + phosphate + 2 H(+). Functionally, allows the formation of correctly charged Asn-tRNA(Asn) or Gln-tRNA(Gln) through the transamidation of misacylated Asp-tRNA(Asn) or Glu-tRNA(Gln) in organisms which lack either or both of asparaginyl-tRNA or glutaminyl-tRNA synthetases. The reaction takes place in the presence of glutamine and ATP through an activated phospho-Asp-tRNA(Asn) or phospho-Glu-tRNA(Gln). This Mycobacterium leprae (strain Br4923) protein is Aspartyl/glutamyl-tRNA(Asn/Gln) amidotransferase subunit B.